The following is a 634-amino-acid chain: Mitochondrial Rho GTPase 1 (634 aa).

The Cytoplasmic segment spans residues 1-604 (MLCCMRICVC…PRSEEDVEGK (604 aa)). The Miro 1 domain occupies 2–171 (LCCMRICVCG…FFLCQKAVTH (170 aa)). Residues 11 to 18 (GDEGTGKS), 60 to 64 (DTSAV), and 116 to 119 (NKSD) each bind GTP. EF-hand domains lie at 187 to 222 (AAVA…CFEK) and 307 to 342 (EGYR…TPGL). 9 residues coordinate Ca(2+): aspartate 200, aspartate 202, aspartate 204, tyrosine 206, glutamate 211, aspartate 320, aspartate 322, aspartate 324, and glutamate 331. The interval 399-419 (NPSTTAALKVTRPRKRRKRPG) is disordered. The segment covering 409-419 (TRPRKRRKRPG) has biased composition (basic residues). A Miro 2 domain is found at 423–589 (RNVVLGHIVG…FVHIAEAAME (167 aa)). Residues 432-439 (GAPGSGKS), 468-472 (ELPGG), and 538-541 (LKAD) each bind GTP. Residues 605-625 (WMSWGIALGAVVCAGAAAVMI) form a helical; Anchor for type IV membrane protein membrane-spanning segment. At 626–634 (WRRVSGSGV) the chain is on the mitochondrial intermembrane side.

The protein belongs to the mitochondrial Rho GTPase family.

It is found in the mitochondrion outer membrane. Its function is as follows. Mitochondrial GTPase involved in mitochondrial trafficking. Probably involved in control of anterograde transport of mitochondria and their subcellular distribution. This chain is Mitochondrial Rho GTPase 1 (gem1), found in Emericella nidulans (strain FGSC A4 / ATCC 38163 / CBS 112.46 / NRRL 194 / M139) (Aspergillus nidulans).